Consider the following 556-residue polypeptide: Formate--tetrahydrofolate ligase (556 aa).

65–72 (TPAGEGKT) provides a ligand contact to ATP.

Belongs to the formate--tetrahydrofolate ligase family.

The enzyme catalyses (6S)-5,6,7,8-tetrahydrofolate + formate + ATP = (6R)-10-formyltetrahydrofolate + ADP + phosphate. Its pathway is one-carbon metabolism; tetrahydrofolate interconversion. In Lachnoclostridium phytofermentans (strain ATCC 700394 / DSM 18823 / ISDg) (Clostridium phytofermentans), this protein is Formate--tetrahydrofolate ligase.